We begin with the raw amino-acid sequence, 404 residues long: Tyrosine--tRNA ligase (404 aa).

The 'HIGH' region signature appears at 45 to 54 (PTAPDLHLGH). The 'KMSKS' region motif lies at 229–233 (KMSKS). K232 contacts ATP. An S4 RNA-binding domain is found at 342-402 (IFIASIVRLA…GKKAIAQVTF (61 aa)).

It belongs to the class-I aminoacyl-tRNA synthetase family. TyrS type 2 subfamily. As to quaternary structure, homodimer.

Its subcellular location is the cytoplasm. The catalysed reaction is tRNA(Tyr) + L-tyrosine + ATP = L-tyrosyl-tRNA(Tyr) + AMP + diphosphate + H(+). Functionally, catalyzes the attachment of tyrosine to tRNA(Tyr) in a two-step reaction: tyrosine is first activated by ATP to form Tyr-AMP and then transferred to the acceptor end of tRNA(Tyr). This chain is Tyrosine--tRNA ligase, found in Acinetobacter baylyi (strain ATCC 33305 / BD413 / ADP1).